A 428-amino-acid polypeptide reads, in one-letter code: Trigger factor (428 aa).

Residues 163 to 248 (GDTAVIDFEG…IKEIKVKELP (86 aa)) enclose the PPIase FKBP-type domain.

It belongs to the FKBP-type PPIase family. Tig subfamily.

The protein resides in the cytoplasm. The enzyme catalyses [protein]-peptidylproline (omega=180) = [protein]-peptidylproline (omega=0). Its function is as follows. Involved in protein export. Acts as a chaperone by maintaining the newly synthesized protein in an open conformation. Functions as a peptidyl-prolyl cis-trans isomerase. This chain is Trigger factor, found in Ruminiclostridium cellulolyticum (strain ATCC 35319 / DSM 5812 / JCM 6584 / H10) (Clostridium cellulolyticum).